The primary structure comprises 599 residues: NTPase KAP family P-loop domain-containing protein 1 (599 aa).

A KAP NTPase domain is found at 1–416 (MQQEAAQRES…NTVPITVRLL (416 aa)). 3 helical membrane-spanning segments follow: residues 25-45 (GWGVPKLLWFLVFLQPVITEL), 119-139 (VCLALLALLAALCLGVGLLYL), and 156-176 (ALGGAATTLSGSGLLMAVYSV). The interval 543–599 (ALKPPSPPKSPSQDGPQASPRAIIAAGTSHAGQGSGHSKEAHQTRDRTHGGKPRPMA) is disordered. The segment covering 579-591 (HSKEAHQTRDRTH) has biased composition (basic and acidic residues).

It localises to the membrane. The chain is NTPase KAP family P-loop domain-containing protein 1 (Nkpd1) from Mus musculus (Mouse).